We begin with the raw amino-acid sequence, 617 residues long: Vacuolar protein sorting-associated protein 33B (617 aa).

Ala2 is modified (N-acetylalanine).

The protein belongs to the STXBP/unc-18/SEC1 family. As to quaternary structure, interacts with RAB11A and VIPAS39. Interacts with RAB25. Associates with adapter protein complex 3 (AP-3), clathrin:AP-3 and clathrin:HGS complexes. (Microbial infection) Interacts with M.tuberculosis PtpA. Post-translationally, phosphorylated on tyrosine residues. (Microbial infection) Dephosphorylated by M.tuberculosis PtpA, which induces the reduction of host phagolysosome fusion in M.tuberculosis-infected macrophages. As to expression, ubiquitous; highly expressed in testis and low expression in the lung.

The protein resides in the late endosome membrane. Its subcellular location is the lysosome membrane. The protein localises to the early endosome. It is found in the cytoplasmic vesicle. It localises to the clathrin-coated vesicle. The protein resides in the recycling endosome. In terms of biological role, may play a role in vesicle-mediated protein trafficking to lysosomal compartments and in membrane docking/fusion reactions of late endosomes/lysosomes. Required for proper trafficking and targeting of the collagen-modifying enzyme lysyl hydroxylase 3 (LH3) to intracellular collagen. Mediates phagolysosomal fusion in macrophages. Proposed to be involved in endosomal maturation implicating VIPAS39. In epithelial cells, the VPS33B:VIPAS39 complex may play a role in the apical recycling pathway and in the maintenance of the apical-basolateral polarity. Seems to be involved in the sorting of specific cargos from the trans-Golgi network to alpha-granule-destined multivesicular bodies (MVBs) promoting MVBs maturation in megakaryocytes. The chain is Vacuolar protein sorting-associated protein 33B (VPS33B) from Homo sapiens (Human).